Here is a 1045-residue protein sequence, read N- to C-terminus: Mitotic deacetylase-associated SANT domain protein (1045 aa).

Residue Met-1 is modified to N-acetylmethionine. 2 disordered regions span residues 1–68 and 99–159; these read MNLQ…PPPS and NSVM…PTYY. Over residues 132–146 the composition is skewed to polar residues; the sequence is STWNCHSLSLYSATK. Lys-166 is covalently cross-linked (Glycyl lysine isopeptide (Lys-Gly) (interchain with G-Cter in SUMO2)). Arg-193 is subject to Asymmetric dimethylarginine. 5 disordered regions span residues 228 to 264, 276 to 305, 330 to 349, 378 to 397, and 410 to 441; these read QVFRQGPPPPNPVAAFPPQKQQQQQQPQQQQQQQQAA, SMPQQPSQQPQDFGLQPAGPLGQSHLAHHS, APQPALPQVQIPFPRRSRRL, HHWPLQQPPPGSLGQPHPEA, and LPDGERLAPNGREREAPAMGSEEGMRAVSTGD. Low complexity predominate over residues 240–264; sequence VAAFPPQKQQQQQQPQQQQQQQQAA. The segment covering 412–425 has biased composition (basic and acidic residues); sequence DGERLAPNGREREA. Arg-447 bears the Omega-N-methylarginine mark. Ser-461 bears the Phosphoserine mark. A disordered region spans residues 543–563; sequence QAGGLDEDGKGPEQNPAEHKP. Residues 549-563 show a composition bias toward basic and acidic residues; the sequence is EDGKGPEQNPAEHKP. Lys-590 is covalently cross-linked (Glycyl lysine isopeptide (Lys-Gly) (interchain with G-Cter in SUMO1); alternate). Lys-590 is covalently cross-linked (Glycyl lysine isopeptide (Lys-Gly) (interchain with G-Cter in SUMO2); alternate). The residue at position 655 (Thr-655) is a Phosphothreonine. Phosphoserine is present on Ser-661. A Phosphothreonine modification is found at Thr-704. Position 709 is a phosphoserine (Ser-709). Thr-715 is modified (phosphothreonine). The 93-residue stretch at 721–813 folds into the ELM2 domain; sequence PRINVGSRFQ…ETLNKLLLKK (93 aa). Residues 828–879 form the SANT domain; that stretch reads TGSDQWKMAERKLFNKGIAIYKKDFFLVQKLIQTKTVAQCVEFYYTYKKQVK. The disordered stretch occupies residues 887–1045; it reads TFGDVDTSDE…NTFPCKKCGR (159 aa). 2 stretches are compositionally biased toward basic and acidic residues: residues 894 to 909 and 919 to 942; these read SDEKSAQEEVEVDIKT and PRRESPSEERLEPKREVKEPRKEG. The residue at position 923 (Ser-923) is a Phosphoserine. Acidic residues predominate over residues 943-957; sequence EEEVPEIQEKEEQEE. Residues 970 to 980 show a composition bias toward polar residues; that stretch reads ATQTLQANESA.

As to quaternary structure, interacts with DNTTIP1. Identified in a histone deacetylase complex that contains DNTTIP1, HDAC1 and MIDEAS; this complex assembles into a tetramer that contains four copies of each protein chain.

It localises to the nucleus. The sequence is that of Mitotic deacetylase-associated SANT domain protein from Homo sapiens (Human).